We begin with the raw amino-acid sequence, 106 residues long: UPF0145 protein SCO3412 (106 aa).

The protein belongs to the UPF0145 family.

The sequence is that of UPF0145 protein SCO3412 from Streptomyces coelicolor (strain ATCC BAA-471 / A3(2) / M145).